We begin with the raw amino-acid sequence, 31 residues long: L-amino-acid oxidase (31 aa).

It belongs to the flavin monoamine oxidase family. FIG1 subfamily. Homodimer; non-covalently linked. FAD is required as a cofactor. In terms of processing, N-glycosylated. In terms of tissue distribution, expressed by the venom gland.

It localises to the secreted. It catalyses the reaction an L-alpha-amino acid + O2 + H2O = a 2-oxocarboxylate + H2O2 + NH4(+). It carries out the reaction L-leucine + O2 + H2O = 4-methyl-2-oxopentanoate + H2O2 + NH4(+). The catalysed reaction is L-phenylalanine + O2 + H2O = 3-phenylpyruvate + H2O2 + NH4(+). The enzyme catalyses L-histidine + O2 + H2O = 3-(imidazol-5-yl)pyruvate + H2O2 + NH4(+). In terms of biological role, catalyzes an oxidative deamination of predominantly hydrophobic and aromatic L-amino acids, thus producing hydrogen peroxide that may contribute to the diverse toxic effects of this enzyme. Is moderately active on L-Leu, L-His, and L-Phe, and very weakly active on L-Thr, and L-Cys. Exhibits diverse biological activities, such as hemorrhage, hemolysis, edema, antibacterial and antiparasitic activities, as well as regulation of platelet aggregation. Its effect on platelets is controversial, since it either induces aggregation or inhibits agonist-induced aggregation. These different effects are probably due to different experimental conditions. Inhibits growth of B.subtilis strain ATCC 6633 (MIC=32 uM), E.faecalis strain ATCC 12953 (MIC=32 uM), S.aureus strain ATCC 29213 (MIC=32 uM), S.pyogenes strain ATCC 19615 (MIC=8 uM), E.coli strain ATCC 8739 (MIC=4 uM), K.pneumoniae strain ATCC 13885 (MIC=2 uM), P.mirabilis strain ATCC 25933 (MIC=2 uM), P.aeruginosa strain ATCC 15442 (MIC=8 uM) and S.typhimurium strain ATCC 14028 (MIC=8 uM). The protein is L-amino-acid oxidase of Bothrops mattogrossensis (Pitviper).